Reading from the N-terminus, the 277-residue chain is Large ribosomal subunit protein uL2 (277 aa).

The interval 220 to 277 (VRGSVMNPNDHPHGGGEGKAPIGRPSPMSPWGKKTLGKKTRSSKARSEKLIIRHRKSR) is disordered. Basic residues predominate over residues 254-263 (TLGKKTRSSK).

It belongs to the universal ribosomal protein uL2 family. As to quaternary structure, part of the 50S ribosomal subunit. Forms a bridge to the 30S subunit in the 70S ribosome.

Functionally, one of the primary rRNA binding proteins. Required for association of the 30S and 50S subunits to form the 70S ribosome, for tRNA binding and peptide bond formation. It has been suggested to have peptidyltransferase activity; this is somewhat controversial. Makes several contacts with the 16S rRNA in the 70S ribosome. This chain is Large ribosomal subunit protein uL2, found in Latilactobacillus sakei subsp. sakei (strain 23K) (Lactobacillus sakei subsp. sakei).